We begin with the raw amino-acid sequence, 160 residues long: SsrA-binding protein (160 aa).

A disordered region spans residues 131-160 (KKEYDKRDTERERDAGRELQRAVRNKGKED).

The protein belongs to the SmpB family.

It localises to the cytoplasm. Its function is as follows. Required for rescue of stalled ribosomes mediated by trans-translation. Binds to transfer-messenger RNA (tmRNA), required for stable association of tmRNA with ribosomes. tmRNA and SmpB together mimic tRNA shape, replacing the anticodon stem-loop with SmpB. tmRNA is encoded by the ssrA gene; the 2 termini fold to resemble tRNA(Ala) and it encodes a 'tag peptide', a short internal open reading frame. During trans-translation Ala-aminoacylated tmRNA acts like a tRNA, entering the A-site of stalled ribosomes, displacing the stalled mRNA. The ribosome then switches to translate the ORF on the tmRNA; the nascent peptide is terminated with the 'tag peptide' encoded by the tmRNA and targeted for degradation. The ribosome is freed to recommence translation, which seems to be the essential function of trans-translation. The sequence is that of SsrA-binding protein from Pseudomonas fluorescens (strain Pf0-1).